Here is a 146-residue protein sequence, read N- to C-terminus: 3-dehydroquinate dehydratase (146 aa).

Residue tyrosine 24 is the Proton acceptor of the active site. Asparagine 75, histidine 81, and aspartate 88 together coordinate substrate. Catalysis depends on histidine 101, which acts as the Proton donor. Residues 102–103 (LS) and arginine 112 each bind substrate.

This sequence belongs to the type-II 3-dehydroquinase family. In terms of assembly, homododecamer.

The catalysed reaction is 3-dehydroquinate = 3-dehydroshikimate + H2O. It participates in metabolic intermediate biosynthesis; chorismate biosynthesis; chorismate from D-erythrose 4-phosphate and phosphoenolpyruvate: step 3/7. Functionally, catalyzes a trans-dehydration via an enolate intermediate. The polypeptide is 3-dehydroquinate dehydratase (Maricaulis maris (strain MCS10) (Caulobacter maris)).